The sequence spans 560 residues: Protein AATF (560 aa).

Ala-2 carries the post-translational modification N-acetylalanine. Phosphoserine is present on residues Ser-61 and Ser-63. Positions 76–208 (TSRKAWNEDH…GDRNSEDDGV (133 aa)) are disordered. A compositionally biased stretch (acidic residues) spans 94-129 (SDEEISDEEGSGDEDSEGLGLEEYDEDDLGAAEEQE). Phosphoserine is present on residues Ser-150 and Ser-155. Basic and acidic residues predominate over residues 156–165 (DFEKFTKGMD). The segment covering 168–195 (GSSEEEEDEESGMEEGDDAEDSQGESEE) has biased composition (acidic residues). Phosphoserine occurs at positions 203, 273, 316, 320, and 321. Residues 273 to 315 (SALKNSHKALKALLRSLVGLQEELLFQYPDTRYLVDGTKPNAG) are POLR2J binding. The disordered stretch occupies residues 309–333 (GTKPNAGSEEISSEDDELVEEKKQQ). An RB1 binding region spans residues 316–372 (SEEISSEDDELVEEKKQQRRRVPAKRKLEMEDYPSFMAKRFADFTVYRNRTLQKWHD). Residues 373–472 (KTKLASGKLG…FYHQLLRELI (100 aa)) are RB1 and SP1 binding.

This sequence belongs to the AATF family. Part of the small subunit (SSU) processome, composed of more than 70 proteins and the RNA chaperone small nucleolar RNA (snoRNA) U3. Interacts with POLR2J, RB1/RB, RBL1/P107 and RBL2/P130. Interacts with PAWR and SP1. May also bind MAPT. In terms of processing, hyperphosphorylated during the G1/S phase transition. Ubiquitously expressed. Expressed at high levels in brain, heart, kidney, placenta and thymus.

The protein localises to the nucleus. Its subcellular location is the nucleolus. Functionally, part of the small subunit (SSU) processome, first precursor of the small eukaryotic ribosomal subunit. During the assembly of the SSU processome in the nucleolus, many ribosome biogenesis factors, an RNA chaperone and ribosomal proteins associate with the nascent pre-rRNA and work in concert to generate RNA folding, modifications, rearrangements and cleavage as well as targeted degradation of pre-ribosomal RNA by the RNA exosome. May function as a general inhibitor of the histone deacetylase HDAC1. Binding to the pocket region of RB1 may displace HDAC1 from RB1/E2F complexes, leading to activation of E2F target genes and cell cycle progression. Conversely, displacement of HDAC1 from SP1 bound to the CDKN1A promoter leads to increased expression of this CDK inhibitor and blocks cell cycle progression. Also antagonizes PAWR mediated induction of aberrant amyloid peptide production in Alzheimer disease (presenile and senile dementia), although the molecular basis for this phenomenon has not been described to date. The sequence is that of Protein AATF from Homo sapiens (Human).